A 360-amino-acid chain; its full sequence is Phospho-N-acetylmuramoyl-pentapeptide-transferase (360 aa).

10 helical membrane-spanning segments follow: residues 27 to 47 (ILSI…LIAW), 73 to 93 (TMGG…WADL), 94 to 114 (TNPY…VGFV), 132 to 152 (WKYF…YAYG), 168 to 188 (VMPQ…VGTS), 199 to 219 (GLAI…AWAT), 236 to 256 (ASEL…FLWF), 263 to 283 (VFMG…IAVL), 288 to 308 (FLLV…ILQV), and 338 to 358 (VIVR…ATLK).

The protein belongs to the glycosyltransferase 4 family. MraY subfamily. The cofactor is Mg(2+).

It is found in the cell inner membrane. The catalysed reaction is UDP-N-acetyl-alpha-D-muramoyl-L-alanyl-gamma-D-glutamyl-meso-2,6-diaminopimeloyl-D-alanyl-D-alanine + di-trans,octa-cis-undecaprenyl phosphate = di-trans,octa-cis-undecaprenyl diphospho-N-acetyl-alpha-D-muramoyl-L-alanyl-D-glutamyl-meso-2,6-diaminopimeloyl-D-alanyl-D-alanine + UMP. Its pathway is cell wall biogenesis; peptidoglycan biosynthesis. In terms of biological role, catalyzes the initial step of the lipid cycle reactions in the biosynthesis of the cell wall peptidoglycan: transfers peptidoglycan precursor phospho-MurNAc-pentapeptide from UDP-MurNAc-pentapeptide onto the lipid carrier undecaprenyl phosphate, yielding undecaprenyl-pyrophosphoryl-MurNAc-pentapeptide, known as lipid I. The sequence is that of Phospho-N-acetylmuramoyl-pentapeptide-transferase from Aliivibrio fischeri (strain MJ11) (Vibrio fischeri).